The chain runs to 271 residues: MAKVPDMFEDLKNCYSENEEDSSSIDHLSLNQKSFYDVSYGPLHEGCMDQSVSLSISEISKTSKLTFKQSMVVVSTNGKVLKKRRLSLSQSITDNNLEAIANDSEEEIIKPRSAPFSFLSNMTYHFIRIIKHEFILNDTLNQTIIRANDQHLTAAAIHNLDEAVKFDMGAYTSSKDDTKVPVILRISKTQLYVSAQDEDQPVLLKEMPEINKTITGSETNFLFFWETHGTKNYFISVAHPNLFIATKHDNWVCLAKGLPSITDFQILENQA.

A propeptide spanning residues 1–112 (MAKVPDMFED…DSEEEIIKPR (112 aa)) is cleaved from the precursor. Lysine 82 carries the post-translational modification N6-acetyllysine. The interval 82-86 (KKRRL) is nuclear localization signal (NLS). Serine 87 carries the post-translational modification Phosphoserine. N-linked (GlcNAc...) asparagine glycosylation is found at asparagine 102, asparagine 121, asparagine 137, asparagine 141, and asparagine 211.

The protein belongs to the IL-1 family. As to quaternary structure, monomer. Interacts with TMED10; the interaction mediates the translocation from the cytoplasm into the ERGIC (endoplasmic reticulum-Golgi intermediate compartment) and thereby secretion. Interacts with IL1R1. Interacts with S100A13; this interaction is the first step in the export of IL1A, followed by direct translocation of this complex across the plasma membrane. Post-translationally, acetylated within its nuclear localization sequence, which impacts subcellular localization. Proteolytic processed by CAPN1 in a calcium-dependent manner. Cleavage from 31 kDa precursor to 18 kDa biologically active molecules. In terms of processing, phosphorylated. Phosphorylation greatly enhances susceptibility to digestion and promotes the conversion of pre-IL1A alpha to the biologically active IL1A.

The protein resides in the nucleus. The protein localises to the cytoplasm. It is found in the secreted. In terms of biological role, cytokine constitutively present intracellularly in nearly all resting non-hematopoietic cells that plays an important role in inflammation and bridges the innate and adaptive immune systems. After binding to its receptor IL1R1 together with its accessory protein IL1RAP, forms the high affinity interleukin-1 receptor complex. Signaling involves the recruitment of adapter molecules such as MYD88, IRAK1 or IRAK4. In turn, mediates the activation of NF-kappa-B and the three MAPK pathways p38, p42/p44 and JNK pathways. Within the cell, acts as an alarmin and cell death results in its liberation in the extracellular space after disruption of the cell membrane to induce inflammation and alert the host to injury or damage. In addition to its role as a danger signal, which occurs when the cytokine is passively released by cell necrosis, directly senses DNA damage and acts as signal for genotoxic stress without loss of cell integrity. The sequence is that of Interleukin-1 alpha (IL1A) from Macaca mulatta (Rhesus macaque).